A 165-amino-acid chain; its full sequence is Neuritin-like protein (165 aa).

The signal sequence occupies residues 1-35; it reads MMRCCRRRCCCRQPPHALRPLLLLPLVLLPPLAAA. Alanine 139 carries the GPI-anchor amidated alanine lipid modification. Positions 140–165 are cleaved as a propeptide — removed in mature form; sequence PALPMAPAPPLLAAALALAYLLRPLA.

It belongs to the neuritin family.

It localises to the cell membrane. The polypeptide is Neuritin-like protein (NRN1L) (Homo sapiens (Human)).